We begin with the raw amino-acid sequence, 140 residues long: Putative esterase SSO2140 (140 aa).

This sequence belongs to the thioesterase PaaI family.

The sequence is that of Putative esterase SSO2140 from Saccharolobus solfataricus (strain ATCC 35092 / DSM 1617 / JCM 11322 / P2) (Sulfolobus solfataricus).